A 148-amino-acid chain; its full sequence is Large ribosomal subunit protein uL13 (148 aa).

Belongs to the universal ribosomal protein uL13 family. Part of the 50S ribosomal subunit.

Its function is as follows. This protein is one of the early assembly proteins of the 50S ribosomal subunit, although it is not seen to bind rRNA by itself. It is important during the early stages of 50S assembly. This chain is Large ribosomal subunit protein uL13, found in Lacticaseibacillus casei (strain BL23) (Lactobacillus casei).